A 214-amino-acid polypeptide reads, in one-letter code: MSVTQRHAEELLQGARELGIELSERQQEQLLAYLGLLIKWNKAYNLTAVRDPDEMVSRHLLDSLSVVPFVAERGDNWLDVGSGGGMPGIPLAIMFPERRFTLLDSNGKKTRFLVQVKLELKLANLEVVHSRVETYRPEQPFDGISSRAFSSLQDFSDWTRHLGSADTHWLAMKGLHPGDELQALPADFRLDATHVLRVPGCQGQRHLLILRRSV.

S-adenosyl-L-methionine-binding positions include Gly81, Met86, Val132–Glu133, and Arg147.

It belongs to the methyltransferase superfamily. RNA methyltransferase RsmG family.

The protein localises to the cytoplasm. It catalyses the reaction guanosine(527) in 16S rRNA + S-adenosyl-L-methionine = N(7)-methylguanosine(527) in 16S rRNA + S-adenosyl-L-homocysteine. Its function is as follows. Specifically methylates the N7 position of guanine in position 527 of 16S rRNA. The sequence is that of Ribosomal RNA small subunit methyltransferase G from Ectopseudomonas mendocina (strain ymp) (Pseudomonas mendocina).